Reading from the N-terminus, the 806-residue chain is Transitional endoplasmic reticulum ATPase (806 aa).

Ala-2 carries the post-translational modification N-acetylalanine. 2 positions are modified to phosphoserine: Ser-3 and Ser-7. A Glycyl lysine isopeptide (Lys-Gly) (interchain with G-Cter in SUMO2) cross-link involves residue Lys-8. Ser-13 carries the phosphoserine modification. Lys-18 is covalently cross-linked (Glycyl lysine isopeptide (Lys-Gly) (interchain with G-Cter in SUMO2)). Phosphoserine is present on Ser-37. 247–253 serves as a coordination point for ATP; sequence PGTGKTL. Lys-315 is subject to N6,N6,N6-trimethyllysine; by VCPKMT. Asn-348 and His-384 together coordinate ATP. The residue at position 436 (Thr-436) is a Phosphothreonine. Ser-462 is subject to Phosphoserine. N6-acetyllysine is present on residues Lys-502 and Lys-505. ATP is bound at residue 521-526; that stretch reads GCGKTL. Residue Lys-668 is modified to N6-acetyllysine; alternate. Lys-668 is subject to N6-succinyllysine; alternate. Position 702 is a phosphoserine (Ser-702). The interval 708–727 is disordered; it reads RRERERQTNPSAMEVEEDDP. N6-acetyllysine is present on Lys-754. The segment at 768–806 is disordered; the sequence is FGSFRFPSGNQGGAGPSQGSGGGTGGSVYTEDNDDDLYG. Residues Ser-770, Ser-775, and Ser-787 each carry the phosphoserine modification. The segment covering 777-793 has biased composition (gly residues); that stretch reads NQGGAGPSQGSGGGTGG. The tract at residues 797 to 806 is interaction with UBXN6; it reads TEDNDDDLYG. Position 805 is a phosphotyrosine (Tyr-805).

This sequence belongs to the AAA ATPase family. In terms of assembly, homohexamer. Forms a ring-shaped particle of 12.5 nm diameter, that displays 6-fold radial symmetry. Part of a ternary complex containing STX5A, NSFL1C and VCP. NSFL1C forms a homotrimer that binds to one end of a VCP homohexamer. The complex binds to membranes enriched in phosphatidylethanolamine-containing lipids and promotes Golgi membrane fusion. Binds to a heterodimer of NPLOC4 and UFD1, binding to this heterodimer inhibits Golgi-membrane fusion. Interaction with VCIP135 leads to dissociation of the complex via ATP hydrolysis by VCP. Part of a ternary complex containing NPLOC4, UFD1 and VCP. Interacts with NSFL1C-like protein p37; the complex has membrane fusion activity and is required for Golgi and endoplasmic reticulum biogenesis. Interacts with SELENOS and SYVN1, as well as with DERL1 (via SHP-box motif), DERL2 and DERL3; which probably transfer misfolded proteins from the ER to VCP. Interacts with SVIP and DERL1. Component of a complex required to couple retrotranslocation, ubiquitination and deglycosylation composed of NGLY1, SAKS1, AMFR, VCP and RAD23B. Part of a complex composed of STUB1/CHIP, VCP/p97, CHRNA3, and UBXN2A that modulates the ubiquitination and endoplasmic reticulum-associated degradation (ERAD) of CHRNA3. Within the complex UBXN2A acts as a scaffold protein required for the interaction of CHRNA3 with VCP/p97, this interaction also inhibits CHRNA3 ubiquitination by STUB1/CHIP and subsequently ERAD. Interacts with UBXN2A (via UBX domain); the interaction is required for the interaction of CHRNA3 in the STUB1-VCP-UBXN2A complex. Directly interacts with UBXN4 and RNF19A. Interacts with CASR. Interacts with UBE4B and YOD1. Interacts with clathrin. Interacts with RNF103. Interacts with TRIM13 and TRIM21. Component of a VCP/p97-AMFR/gp78 complex that participates in the final step of the endoplasmic reticulum-associated degradation (ERAD) of HMGCR. Interacts directly with AMFR/gp78 (via its VIM). Interacts with RHBDD1 (via C-terminal domain). Interacts with SPRTN; leading to recruitment to stalled replication forks. Interacts with WASHC5. Interacts with UBOX5. Interacts (via N-terminus) with UBXN7, UBXN8, and probably several other UBX domain-containing proteins (via UBX domains); the interactions are mutually exclusive with VIM-dependent interactions such as those with AMFR and SELENOS. Forms a complex with UBQLN1 and UBXN4. Interacts (via the PIM motif) with RNF31 (via the PUB domain). Interacts with RIGI and RNF125; interaction takes place when RIGI is ubiquitinated via 'Lys-63'-linked ubiquitin on its CARD domains, leading to recruit RNF125 and promote ubiquitination and degradation of RIGI. Interacts with BAG6. Interacts with UBXN10. Interacts with UBXN6; the interaction with UBXN6 is direct and competitive with UFD1. Forms a ternary complex with CAV1 and UBXN6. Interacts with PLAA, UBXN6 and YOD1; may form a complex involved in macroautophagy. Interacts with ANKZF1. Interacts with ubiquitin-binding protein FAF1. Interacts with ZFAND2B (via VIM motif); the interaction is direct. Interacts with ZFAND1 (via its ubiquitin-like region); this interaction occurs in an arsenite-dependent manner. Interacts with CCDC47. Interacts with LMBR1L and UBAC2. Interacts with ATXN3. Interacts with TEX264; bridging VCP to covalent DNA-protein cross-links (DPCs). It depends on Mg(2+) as a cofactor. Post-translationally, ISGylated. Methylation at Lys-315 catalyzed by VCPKMT is increased in the presence of ASPSCR1. Lys-315 methylation may decrease ATPase activity. In terms of processing, phosphorylated by tyrosine kinases in response to T-cell antigen receptor activation. Phosphorylated in mitotic cells.

Its subcellular location is the cytoplasm. It localises to the cytosol. The protein localises to the endoplasmic reticulum. It is found in the nucleus. The protein resides in the stress granule. It carries out the reaction ATP + H2O = ADP + phosphate + H(+). Its function is as follows. Necessary for the fragmentation of Golgi stacks during mitosis and for their reassembly after mitosis. Involved in the formation of the transitional endoplasmic reticulum (tER). The transfer of membranes from the endoplasmic reticulum to the Golgi apparatus occurs via 50-70 nm transition vesicles which derive from part-rough, part-smooth transitional elements of the endoplasmic reticulum (tER). Vesicle budding from the tER is an ATP-dependent process. The ternary complex containing UFD1, VCP and NPLOC4 binds ubiquitinated proteins and is necessary for the export of misfolded proteins from the ER to the cytoplasm, where they are degraded by the proteasome. The NPLOC4-UFD1-VCP complex regulates spindle disassembly at the end of mitosis and is necessary for the formation of a closed nuclear envelope. Regulates E3 ubiquitin-protein ligase activity of RNF19A. Component of the VCP/p97-AMFR/gp78 complex that participates in the final step of the sterol-mediated ubiquitination and endoplasmic reticulum-associated degradation (ERAD) of HMGCR. Mediates the endoplasmic reticulum-associated degradation of CHRNA3 in cortical neurons as part of the STUB1-VCP-UBXN2A complex. Involved in endoplasmic reticulum stress-induced pre-emptive quality control, a mechanism that selectively attenuates the translocation of newly synthesized proteins into the endoplasmic reticulum and reroutes them to the cytosol for proteasomal degradation. Involved in clearance process by mediating G3BP1 extraction from stress granules. Also involved in DNA damage response: recruited to double-strand breaks (DSBs) sites in a RNF8- and RNF168-dependent manner and promotes the recruitment of TP53BP1 at DNA damage sites. Recruited to stalled replication forks by SPRTN: may act by mediating extraction of DNA polymerase eta (POLH) to prevent excessive translesion DNA synthesis and limit the incidence of mutations induced by DNA damage. Together with SPRTN metalloprotease, involved in the repair of covalent DNA-protein cross-links (DPCs) during DNA synthesis. Involved in interstrand cross-link repair in response to replication stress by mediating unloading of the ubiquitinated CMG helicase complex. Mediates extraction of PARP1 trapped to chromatin: recognizes and binds ubiquitinated PARP1 and promotes its removal. Required for cytoplasmic retrotranslocation of stressed/damaged mitochondrial outer-membrane proteins and their subsequent proteasomal degradation. Essential for the maturation of ubiquitin-containing autophagosomes and the clearance of ubiquitinated protein by autophagy. Acts as a negative regulator of type I interferon production by interacting with RIGI: interaction takes place when RIGI is ubiquitinated via 'Lys-63'-linked ubiquitin on its CARD domains, leading to recruit RNF125 and promote ubiquitination and degradation of RIGI. May play a role in the ubiquitin-dependent sorting of membrane proteins to lysosomes where they undergo degradation. May more particularly play a role in caveolins sorting in cells. By controlling the steady-state expression of the IGF1R receptor, indirectly regulates the insulin-like growth factor receptor signaling pathway. In Sus scrofa (Pig), this protein is Transitional endoplasmic reticulum ATPase (VCP).